The sequence spans 94 residues: Small ribosomal subunit protein bS6 (94 aa).

The protein belongs to the bacterial ribosomal protein bS6 family.

Its function is as follows. Binds together with bS18 to 16S ribosomal RNA. The sequence is that of Small ribosomal subunit protein bS6 from Clostridium botulinum (strain Loch Maree / Type A3).